A 776-amino-acid polypeptide reads, in one-letter code: Ion-translocating oxidoreductase complex subunit C (776 aa).

2 consecutive 4Fe-4S ferredoxin-type domains span residues 368 to 397 (MGAPQEEQHCIRCSACADACPADLLPQQLY) and 407 to 436 (KATAHNLADCIECGACAYVCPSNIPLVQYF). Cys-377, Cys-380, Cys-383, Cys-387, Cys-416, Cys-419, Cys-422, and Cys-426 together coordinate [4Fe-4S] cluster. 5 stretches are compositionally biased toward basic and acidic residues: residues 534-543 (ARARQAEKVQ), 597-611 (ADEKPAEPIDPRKAA), 633-647 (ADEKPAEPIDPRKAA), 669-683 (ADEKPAEPIDPRKAA), and 705-719 (ADEKPAEPIDPRKAT). The disordered stretch occupies residues 534–754 (ARARQAEKVQ…ENEAEDPRKA (221 aa)). The segment covering 721–743 (EAAIARAKARKAAQAGERAQAAN) has biased composition (low complexity).

The protein belongs to the 4Fe4S bacterial-type ferredoxin family. RnfC subfamily. In terms of assembly, the complex is composed of six subunits: RnfA, RnfB, RnfC, RnfD, RnfE and RnfG. [4Fe-4S] cluster serves as cofactor.

The protein localises to the cell inner membrane. Its function is as follows. Part of a membrane-bound complex that couples electron transfer with translocation of ions across the membrane. The polypeptide is Ion-translocating oxidoreductase complex subunit C (Cronobacter sakazakii (strain ATCC BAA-894) (Enterobacter sakazakii)).